The chain runs to 291 residues: Bis(5'-nucleosyl)-tetraphosphatase, symmetrical (291 aa).

Belongs to the Ap4A hydrolase family.

The catalysed reaction is P(1),P(4)-bis(5'-adenosyl) tetraphosphate + H2O = 2 ADP + 2 H(+). Functionally, hydrolyzes diadenosine 5',5'''-P1,P4-tetraphosphate to yield ADP. This chain is Bis(5'-nucleosyl)-tetraphosphatase, symmetrical, found in Coxiella burnetii (strain RSA 331 / Henzerling II).